We begin with the raw amino-acid sequence, 616 residues long: Dihydroxy-acid dehydratase (616 aa).

A Mg(2+)-binding site is contributed by aspartate 81. Cysteine 122 contributes to the [2Fe-2S] cluster binding site. Mg(2+)-binding residues include aspartate 123 and lysine 124. An N6-carboxylysine modification is found at lysine 124. Cysteine 195 provides a ligand contact to [2Fe-2S] cluster. Residue glutamate 491 coordinates Mg(2+). The Proton acceptor role is filled by serine 517.

This sequence belongs to the IlvD/Edd family. In terms of assembly, homodimer. [2Fe-2S] cluster serves as cofactor. The cofactor is Mg(2+).

It catalyses the reaction (2R)-2,3-dihydroxy-3-methylbutanoate = 3-methyl-2-oxobutanoate + H2O. The catalysed reaction is (2R,3R)-2,3-dihydroxy-3-methylpentanoate = (S)-3-methyl-2-oxopentanoate + H2O. Its pathway is amino-acid biosynthesis; L-isoleucine biosynthesis; L-isoleucine from 2-oxobutanoate: step 3/4. It functions in the pathway amino-acid biosynthesis; L-valine biosynthesis; L-valine from pyruvate: step 3/4. In terms of biological role, functions in the biosynthesis of branched-chain amino acids. Catalyzes the dehydration of (2R,3R)-2,3-dihydroxy-3-methylpentanoate (2,3-dihydroxy-3-methylvalerate) into 2-oxo-3-methylpentanoate (2-oxo-3-methylvalerate) and of (2R)-2,3-dihydroxy-3-methylbutanoate (2,3-dihydroxyisovalerate) into 2-oxo-3-methylbutanoate (2-oxoisovalerate), the penultimate precursor to L-isoleucine and L-valine, respectively. This Shigella sonnei (strain Ss046) protein is Dihydroxy-acid dehydratase.